The following is a 414-amino-acid chain: Nuclear hormone receptor family member nhr-213 (414 aa).

Positions 21–99 form a DNA-binding region, nuclear receptor; it reads IVLCKVCALS…LGMTPENVQF (79 aa). NR C4-type zinc fingers lie at residues 24 to 44 and 62 to 82; these read CKVCALSAHGSHFGVLACRAC and CKKGKNECPVDTAERYQCRLC. The 253-residue stretch at 162-414 folds into the NR LBD domain; the sequence is SAAKKMNSLE…DFSDPDIFDC (253 aa).

This sequence belongs to the nuclear hormone receptor family.

The protein localises to the nucleus. Orphan nuclear receptor. This chain is Nuclear hormone receptor family member nhr-213 (nhr-213), found in Caenorhabditis elegans.